A 396-amino-acid polypeptide reads, in one-letter code: Protein GTS1 (396 aa).

Residues 14 to 141 form the Arf-GAP domain; sequence DRELKELINS…FRYDEIKPED (128 aa). The C4-type zinc-finger motif lies at 30–53; it reads CGECGNFYPTWCSVNLGVFLCGRC. Positions 148 to 161 are enriched in basic and acidic residues; it reads DFDGESDRFDERNR. Disordered stretches follow at residues 148–194 and 233–266; these read DFDG…SGSR and KSSS…QPAI. Residue serine 153 is modified to Phosphoserine. The residue at position 181 (tyrosine 181) is a Phosphotyrosine. A phosphoserine mark is found at serine 184 and serine 187. The UBA domain occupies 193–234; that stretch reads SRYSRQLAELKDMGFGDTNKNLDALSSAHGNINRAIDYLEKS. Residues 234–249 show a composition bias toward low complexity; that stretch reads SSSSRNSVSAAATTST. Residue serine 240 is modified to Phosphoserine. Threonine 249 carries the phosphothreonine modification.

It is found in the nucleus. Functionally, appears to modulate the timing of budding to obtain an appropriate cell size independent of the DNA replication cycle. Transcription factor involved in both heat resistance and flocculation. This Saccharomyces cerevisiae (strain ATCC 204508 / S288c) (Baker's yeast) protein is Protein GTS1 (GTS1).